Consider the following 1362-residue polypeptide: Leptomycin B resistance protein pmd1 (1362 aa).

The interval 1 to 45 (MSLHSKKSTSTVKDNEHSLDLSIKSIPSNEKNFSTEKSENEASES) is disordered. Topologically, residues 1-91 (MSLHSKKSTS…RILSYADKWD (91 aa)) are cytoplasmic. Over residues 33 to 45 (FSTEKSENEASES) the composition is skewed to basic and acidic residues. 6 consecutive transmembrane segments (helical) span residues 92 to 115 (IMLQ…MSLV), 138 to 162 (TVDH…IYTV), 220 to 237 (LVFF…IAFI), 244 to 264 (LILS…VPFI), 320 to 346 (AIAM…WEGG), and 354 to 374 (LDVS…YSLA). The region spanning 95–385 (QLAGTITGIG…ISPKMQSFVS (291 aa)) is the ABC transmembrane type-1 1 domain. At 375-788 (NISPKMQSFV…LWFIHSFVRT (414 aa)) the chain is on the cytoplasmic side. The ABC transporter 1 domain maps to 420–665 (IELKNIRFVY…NGAYARLVEA (246 aa)). 455-462 (GASGSGKS) lines the ATP pocket. Positions 748 to 768 (LPPADVGELNEEPKKSKKSKK) are disordered. A run of 6 helical transmembrane segments spans residues 789–809 (MIEI…GAAY), 835–859 (VNVF…SNFA), 916–935 (LGTF…LSLA), 940–957 (LGLV…AGYY), 1022–1040 (GLFF…ALTF), and 1054–1072 (IVQF…QQAG). In terms of domain architecture, ABC transmembrane type-1 2 spans 795–1083 (LLIGILASMI…FFGYSADVTK (289 aa)). At 1073–1362 (QFFGYSADVT…LVVEQGLNKA (290 aa)) the chain is on the cytoplasmic side. The ABC transporter 2 domain maps to 1119 to 1356 (IEFRQVEFSY…RGRYYELVVE (238 aa)). Residue 1154–1161 (GSSGCGKS) participates in ATP binding.

The protein belongs to the ABC transporter superfamily. ABCB family. Multidrug resistance exporter (TC 3.A.1.201) subfamily.

The protein resides in the membrane. May be a transmembrane transporter of the mating factor, namely P-factor or M-factor. Confers resistance to leptomycin B and to several other antifungal drugs. This chain is Leptomycin B resistance protein pmd1 (pmd1), found in Schizosaccharomyces pombe (strain 972 / ATCC 24843) (Fission yeast).